We begin with the raw amino-acid sequence, 366 residues long: Phosphoserine aminotransferase (366 aa).

Arg42 lines the L-glutamate pocket. Residues 76-77 (AT), Trp101, Thr156, Asp178, and Gln201 contribute to the pyridoxal 5'-phosphate site. N6-(pyridoxal phosphate)lysine is present on Lys202. 243–244 (NT) provides a ligand contact to pyridoxal 5'-phosphate.

The protein belongs to the class-V pyridoxal-phosphate-dependent aminotransferase family. SerC subfamily. Homodimer. The cofactor is pyridoxal 5'-phosphate.

The protein localises to the cytoplasm. The enzyme catalyses O-phospho-L-serine + 2-oxoglutarate = 3-phosphooxypyruvate + L-glutamate. It carries out the reaction 4-(phosphooxy)-L-threonine + 2-oxoglutarate = (R)-3-hydroxy-2-oxo-4-phosphooxybutanoate + L-glutamate. It participates in amino-acid biosynthesis; L-serine biosynthesis; L-serine from 3-phospho-D-glycerate: step 2/3. The protein operates within cofactor biosynthesis; pyridoxine 5'-phosphate biosynthesis; pyridoxine 5'-phosphate from D-erythrose 4-phosphate: step 3/5. Catalyzes the reversible conversion of 3-phosphohydroxypyruvate to phosphoserine and of 3-hydroxy-2-oxo-4-phosphonooxybutanoate to phosphohydroxythreonine. This chain is Phosphoserine aminotransferase, found in Aromatoleum aromaticum (strain DSM 19018 / LMG 30748 / EbN1) (Azoarcus sp. (strain EbN1)).